Consider the following 403-residue polypeptide: LIM/homeobox protein Lhx1 (403 aa).

LIM zinc-binding domains are found at residues 4-54 (CAGC…CKND) and 63-117 (CAGC…CKED). Residues 131-147 (ISVTGSDPSLSPESQDP) are compositionally biased toward polar residues. 2 disordered regions span residues 131–185 (ISVT…PRTT) and 318–366 (PAGT…SMHS). The segment covering 150–166 (DDAKDSESANVSDKEAG) has biased composition (basic and acidic residues). Residues 179-238 (RRGPRTTIKAKQLETLKAAFAATPKPTRHIREQLAQETGLNMRVIQVWFQNRRSKERRMK) constitute a DNA-binding region (homeobox).

In terms of assembly, interacts with ldb1 via the tandem LIM domains. Both LIM domains are required for optimal binding and binding relieves the inhibitory effect of the LIM domains and activates lhx1. Binding to ldb1 also prevents degradation of ldb1 by rnf12. The stoichiometry of lhx1 and ldb1 is important for their function and an excess of ldb1 can inhibit lhx1 function. Interacts with the N-terminal region of rnf12 by a homeobox-dependent mechanism. As to expression, exhibits a biphasic expression pattern. Initially localized to the Spemann organizer region of gastrulae, leading to expression in prechordal mesoderm and notochord. In the second phase, expressed in the lateral mesoderm and neural plate, eventually concentrating in the pronephros and the CNS. Expressed in the pronephros primordium by late gastrula (stage 12.5) and becomes restricted to the tips of the tubules and ducts as kidney development progresses. In the CNS, becomes progressively recognizable in anatomically distinct structures during larval development. Within the forebrain, shows almost identical expression to lhx5 in the diencephalon, being expressed in alternating stripes to lhx2 and lhx9. Expressed in the diencephalic pretectum within prosomere 1, hypothalamus, ventral thalamus and zona limitans intrathalamica. In the telencephalon, the expression pattern is distinct from lhx5, being localized in the pallium and subpallium. Also expressed in the ventral territories of midbrain (mesencephalon) and hindbrain (rhombencephalon), being expressed in the mesencephalic tegmentum and hindbrain reticular formation. Also shows intense expression in the cerebellum including Purkinje cells.

Its subcellular location is the nucleus. In terms of biological role, involved in the establishment of the body plan via the Spemann organizer during gastrulation. Transcriptional activator required to induce organizer gene expression downstream of siamois. Promotes head formation by binding to 5'-TAAT'-3' elements in the promoters of head organizer genes cer1 and gsc to stimulate expression. Binds as a complex with siamois and mix-A/mix.1 to the cer1 promoter, and with ldb1 and otx2 to the gsc promoter. Also involved in neural induction via the organizer, including a role in notochord formation. Acts synergistically with ldb1 and ssbp in subsequent axis formation. Involved in kidney development, acting synergistically with pax8 to establish the pronephric primordium in late gastrulae/early neurulae and with pax2 during pronephric morphogenesis in tailbud stages. Has a later role in mediating the activity of inhibitors of ventralization. The sequence is that of LIM/homeobox protein Lhx1 (lhx1) from Xenopus laevis (African clawed frog).